Consider the following 426-residue polypeptide: Zinc finger protein 662 (426 aa).

Positions 1–44 constitute a KRAB domain; that stretch reads MLENYGAVASLAAFPFPKPALISQLERGETPWCSVPRGALDGEA. C2H2-type zinc fingers lie at residues 192-214, 220-242, 248-270, 276-298, 304-326, 332-354, 360-382, and 388-410; these read YICE…QKTH, YGCK…QRIH, YECQ…QRIH, FECK…QRIH, YTCK…QRMH, YECK…QRVH, HECT…QRIH, and YKCN…QRRH.

Belongs to the krueppel C2H2-type zinc-finger protein family.

The protein localises to the nucleus. In terms of biological role, may be involved in transcriptional regulation. The polypeptide is Zinc finger protein 662 (ZNF662) (Homo sapiens (Human)).